The chain runs to 113 residues: Hydrogenase maturation factor HypA (113 aa).

Residue His-2 coordinates Ni(2+). Zn(2+)-binding residues include Cys-73, Cys-76, Cys-89, and Cys-92.

Belongs to the HypA/HybF family.

Its function is as follows. Involved in the maturation of [NiFe] hydrogenases. Required for nickel insertion into the metal center of the hydrogenase. This is Hydrogenase maturation factor HypA from Legionella pneumophila subsp. pneumophila (strain Philadelphia 1 / ATCC 33152 / DSM 7513).